A 578-amino-acid chain; its full sequence is 2-succinyl-5-enolpyruvyl-6-hydroxy-3-cyclohexene-1-carboxylate synthase (578 aa).

Belongs to the TPP enzyme family. MenD subfamily. Homodimer. Mg(2+) serves as cofactor. Mn(2+) is required as a cofactor. It depends on thiamine diphosphate as a cofactor.

It catalyses the reaction isochorismate + 2-oxoglutarate + H(+) = 5-enolpyruvoyl-6-hydroxy-2-succinyl-cyclohex-3-ene-1-carboxylate + CO2. It functions in the pathway quinol/quinone metabolism; 1,4-dihydroxy-2-naphthoate biosynthesis; 1,4-dihydroxy-2-naphthoate from chorismate: step 2/7. Its pathway is quinol/quinone metabolism; menaquinone biosynthesis. Its function is as follows. Catalyzes the thiamine diphosphate-dependent decarboxylation of 2-oxoglutarate and the subsequent addition of the resulting succinic semialdehyde-thiamine pyrophosphate anion to isochorismate to yield 2-succinyl-5-enolpyruvyl-6-hydroxy-3-cyclohexene-1-carboxylate (SEPHCHC). This chain is 2-succinyl-5-enolpyruvyl-6-hydroxy-3-cyclohexene-1-carboxylate synthase, found in Prosthecochloris aestuarii (strain DSM 271 / SK 413).